The chain runs to 564 residues: Sphingomyelin phosphodiesterase 1 (564 aa).

Positions 1 to 17 (MRIIYLISTVLLIYTNA) are cleaved as a signal peptide. Positions 37–121 (FQPLCISCTG…IILPDCADPT (85 aa)) constitute a Saposin B-type domain. 3 disulfides stabilise this stretch: C41–C117, C44–C110, and C72–C83. An N-linked (GlcNAc...) asparagine glycan is attached at N151. Zn(2+) contacts are provided by D165 and H167. Disulfide bonds link C180-C185 and C186-C206. N-linked (GlcNAc...) asparagine glycosylation is present at N221. 2 residues coordinate Zn(2+): D234 and N274. A disulfide bond links C341 and C389. A glycan (N-linked (GlcNAc...) asparagine) is linked at N351. Positions 381, 415, and 417 each coordinate Zn(2+). An N-linked (GlcNAc...) asparagine glycan is attached at N430. 2 disulfide bridges follow: C538-C542 and C548-C561. The N-linked (GlcNAc...) asparagine glycan is linked to N556.

This sequence belongs to the acid sphingomyelinase family. Requires Zn(2+) as cofactor.

It is found in the secreted. It catalyses the reaction a sphingomyelin + H2O = phosphocholine + an N-acylsphing-4-enine + H(+). The enzyme catalyses an N-acyl-15-methylhexadecasphing-4-enine-1-phosphocholine + H2O = an N-acyl-15-methylhexadecasphing-4-enine + phosphocholine + H(+). It functions in the pathway lipid metabolism; sphingolipid metabolism. Functionally, sphingomyelin phosphodiesterase (sphingomyelinase) that converts sphingomyelin to ceramide (N-acyl-sphingoid base) and phosphocholine at acidic pH. Displays its enzymatic activity when secreted. May play distinct roles in signaling. The chain is Sphingomyelin phosphodiesterase 1 (asm-1) from Caenorhabditis elegans.